Here is a 142-residue protein sequence, read N- to C-terminus: MAKKVVALIKLQVKAGQANPAPPVGPALGQRGLNIMEFCKAFNAATSKLEPGLPTPVIITAYSDRTFTFITKSTPASVLLKKAAGVSSGSKRPNTDKVGKVTRKQLEEIAKVKEADLTAAELEAAVRTIAGSARSMGLTVEG.

This sequence belongs to the universal ribosomal protein uL11 family. As to quaternary structure, part of the ribosomal stalk of the 50S ribosomal subunit. Interacts with L10 and the large rRNA to form the base of the stalk. L10 forms an elongated spine to which L12 dimers bind in a sequential fashion forming a multimeric L10(L12)X complex. Post-translationally, one or more lysine residues are methylated.

Its function is as follows. Forms part of the ribosomal stalk which helps the ribosome interact with GTP-bound translation factors. The protein is Large ribosomal subunit protein uL11 of Xanthomonas campestris pv. campestris (strain B100).